A 104-amino-acid polypeptide reads, in one-letter code: Large ribosomal subunit protein uL24 (104 aa).

It belongs to the universal ribosomal protein uL24 family. Part of the 50S ribosomal subunit.

One of two assembly initiator proteins, it binds directly to the 5'-end of the 23S rRNA, where it nucleates assembly of the 50S subunit. Its function is as follows. One of the proteins that surrounds the polypeptide exit tunnel on the outside of the subunit. This is Large ribosomal subunit protein uL24 from Pectobacterium atrosepticum (strain SCRI 1043 / ATCC BAA-672) (Erwinia carotovora subsp. atroseptica).